Here is a 231-residue protein sequence, read N- to C-terminus: tRNA (guanine-N(7)-)-methyltransferase (231 aa).

4 residues coordinate S-adenosyl-L-methionine: Glu62, Glu87, Asp114, and Asp137. The active site involves Asp137. Residues Lys141, Asp173, and 210 to 213 (TKFE) each bind substrate.

The protein belongs to the class I-like SAM-binding methyltransferase superfamily. TrmB family.

The catalysed reaction is guanosine(46) in tRNA + S-adenosyl-L-methionine = N(7)-methylguanosine(46) in tRNA + S-adenosyl-L-homocysteine. The protein operates within tRNA modification; N(7)-methylguanine-tRNA biosynthesis. Functionally, catalyzes the formation of N(7)-methylguanine at position 46 (m7G46) in tRNA. This is tRNA (guanine-N(7)-)-methyltransferase from Methylococcus capsulatus (strain ATCC 33009 / NCIMB 11132 / Bath).